A 171-amino-acid polypeptide reads, in one-letter code: Peptidyl-prolyl cis-trans isomerase (171 aa).

A PPIase cyclophilin-type domain is found at 7-170; the sequence is FFDLTIGGAP…KPVVIADCGQ (164 aa).

The protein belongs to the cyclophilin-type PPIase family. In terms of tissue distribution, expressed in leaves, floral buds, growing shoots and stamens at anthesis.

It localises to the cytoplasm. The enzyme catalyses [protein]-peptidylproline (omega=180) = [protein]-peptidylproline (omega=0). Its activity is regulated as follows. Binds cyclosporin A (CsA). CsA mediates some of its effects via an inhibitory action on PPIase. In terms of biological role, PPIases accelerate the folding of proteins. It catalyzes the cis-trans isomerization of proline imidic peptide bonds in oligopeptides. The protein is Peptidyl-prolyl cis-trans isomerase of Solanum lycopersicum (Tomato).